The sequence spans 394 residues: S-adenosylmethionine synthase (394 aa).

His-18 provides a ligand contact to ATP. A Mg(2+)-binding site is contributed by Asp-20. K(+) is bound at residue Glu-46. Residues Glu-59 and Gln-102 each coordinate L-methionine. A flexible loop region spans residues 102–112 (QSPDIDMGVSA). ATP-binding positions include 175-177 (DGK), Asp-250, 256-257 (RK), Ala-273, and Lys-277. Asp-250 contacts L-methionine. Residue Lys-281 coordinates L-methionine.

The protein belongs to the AdoMet synthase family. As to quaternary structure, homotetramer; dimer of dimers. Mg(2+) serves as cofactor. It depends on K(+) as a cofactor.

Its subcellular location is the cytoplasm. It catalyses the reaction L-methionine + ATP + H2O = S-adenosyl-L-methionine + phosphate + diphosphate. It participates in amino-acid biosynthesis; S-adenosyl-L-methionine biosynthesis; S-adenosyl-L-methionine from L-methionine: step 1/1. Functionally, catalyzes the formation of S-adenosylmethionine (AdoMet) from methionine and ATP. The overall synthetic reaction is composed of two sequential steps, AdoMet formation and the subsequent tripolyphosphate hydrolysis which occurs prior to release of AdoMet from the enzyme. This Brachyspira hyodysenteriae (strain ATCC 49526 / WA1) protein is S-adenosylmethionine synthase.